The following is a 355-amino-acid chain: Serum paraoxonase/arylesterase 1 (355 aa).

A disulfide bond links cysteine 42 and cysteine 353. Ca(2+) is bound by residues glutamate 53 and aspartate 54. Histidine 115 functions as the Proton acceptor in the catalytic mechanism. 4 residues coordinate Ca(2+): isoleucine 117, asparagine 168, aspartate 169, and asparagine 224. N-linked (GlcNAc...) asparagine glycosylation is present at asparagine 253. Aspartate 269 and asparagine 270 together coordinate Ca(2+). N-linked (GlcNAc...) asparagine glycans are attached at residues asparagine 270 and asparagine 324.

This sequence belongs to the paraoxonase family. As to quaternary structure, homodimer. Heterooligomer with phosphate-binding protein (HPBP). Interacts with CLU. It depends on Ca(2+) as a cofactor. In terms of processing, glycosylated. Post-translationally, the signal sequence is not cleaved. Present in two forms, form B contains a disulfide bond, form A does not. Plasma, associated with HDL (at protein level). Expressed in liver, but not in heart, brain, placenta, lung, skeletal muscle, kidney or pancreas.

It localises to the secreted. The protein localises to the extracellular space. The catalysed reaction is a phenyl acetate + H2O = a phenol + acetate + H(+). It catalyses the reaction An aryl dialkyl phosphate + H2O = dialkyl phosphate + an aryl alcohol.. The enzyme catalyses an N-acyl-L-homoserine lactone + H2O = an N-acyl-L-homoserine + H(+). Functionally, hydrolyzes the toxic metabolites of a variety of organophosphorus insecticides. Capable of hydrolyzing a broad spectrum of organophosphate substrates and lactones, and a number of aromatic carboxylic acid esters. Mediates an enzymatic protection of low density lipoproteins against oxidative modification and the consequent series of events leading to atheroma formation. The polypeptide is Serum paraoxonase/arylesterase 1 (PON1) (Homo sapiens (Human)).